Consider the following 715-residue polypeptide: Fatty acid oxidation complex subunit alpha (715 aa).

Residues 1-190 are enoyl-CoA hydratase; sequence MTTTSAFMLN…KAGLVDDVVP (190 aa). The segment at 306-714 is 3-hydroxyacyl-CoA dehydrogenase; sequence GPLNSVGILG…FWTNGETDQG (409 aa).

In the N-terminal section; belongs to the enoyl-CoA hydratase/isomerase family. This sequence in the central section; belongs to the 3-hydroxyacyl-CoA dehydrogenase family. Heterotetramer of two alpha chains (FadJ) and two beta chains (FadI).

It localises to the cytoplasm. It carries out the reaction a (3S)-3-hydroxyacyl-CoA = a (2E)-enoyl-CoA + H2O. The catalysed reaction is a 4-saturated-(3S)-3-hydroxyacyl-CoA = a (3E)-enoyl-CoA + H2O. The enzyme catalyses a (3S)-3-hydroxyacyl-CoA + NAD(+) = a 3-oxoacyl-CoA + NADH + H(+). It catalyses the reaction (3S)-3-hydroxybutanoyl-CoA = (3R)-3-hydroxybutanoyl-CoA. The protein operates within lipid metabolism; fatty acid beta-oxidation. Catalyzes the formation of a hydroxyacyl-CoA by addition of water on enoyl-CoA. Also exhibits 3-hydroxyacyl-CoA epimerase and 3-hydroxyacyl-CoA dehydrogenase activities. The chain is Fatty acid oxidation complex subunit alpha from Salmonella choleraesuis (strain SC-B67).